The chain runs to 100 residues: Cell division protein FtsB (100 aa).

The Cytoplasmic segment spans residues 1–3 (MKW). A helical membrane pass occupies residues 4-21 (LAIILVVALLALQYRLWM). Residues 22-100 (GEGSIASVVS…TDKDTKKNKK (79 aa)) lie on the Periplasmic side of the membrane. Residues 26-73 (IASVVSLNREIAKQKEENARLRERNRLLAAEVDALKQGKDAIEERARN) are a coiled coil.

This sequence belongs to the FtsB family. Part of a complex composed of FtsB, FtsL and FtsQ.

It localises to the cell inner membrane. Functionally, essential cell division protein. May link together the upstream cell division proteins, which are predominantly cytoplasmic, with the downstream cell division proteins, which are predominantly periplasmic. In Saccharophagus degradans (strain 2-40 / ATCC 43961 / DSM 17024), this protein is Cell division protein FtsB.